The primary structure comprises 944 residues: 2-oxoglutarate dehydrogenase E1 component (944 aa).

Residues 914–944 (RRRRSSPAEGDPTVHKKEQERIVSDSLTRKN) are disordered. Residues 925 to 936 (PTVHKKEQERIV) are compositionally biased toward basic and acidic residues.

The protein belongs to the alpha-ketoglutarate dehydrogenase family. As to quaternary structure, homodimer. Part of the 2-oxoglutarate dehydrogenase (OGDH) complex composed of E1 (2-oxoglutarate dehydrogenase), E2 (dihydrolipoamide succinyltransferase) and E3 (dihydrolipoamide dehydrogenase); the complex contains multiple copies of the three enzymatic components (E1, E2 and E3). Requires thiamine diphosphate as cofactor.

It catalyses the reaction N(6)-[(R)-lipoyl]-L-lysyl-[protein] + 2-oxoglutarate + H(+) = N(6)-[(R)-S(8)-succinyldihydrolipoyl]-L-lysyl-[protein] + CO2. Its function is as follows. E1 component of the 2-oxoglutarate dehydrogenase (OGDH) complex which catalyzes the decarboxylation of 2-oxoglutarate, the first step in the conversion of 2-oxoglutarate to succinyl-CoA and CO(2). This chain is 2-oxoglutarate dehydrogenase E1 component, found in Bacillus subtilis (strain 168).